The following is a 540-amino-acid chain: Testis-specific chromodomain protein Y 1 (540 aa).

Residues 6–66 form the Chromo domain; it reads FEVEAIVDKR…RQTEKQKKLT (61 aa). Residues 76 to 106 form a disordered region; sequence NNARRRTSRSTKANYSKNSPKTPVTDKHHRS. Positions 87 to 97 are enriched in polar residues; that stretch reads KANYSKNSPKT.

Interacts (via chromo domain) with histone H3K9me3. Testis-specific. Detected in spermatids (at protein level).

Its subcellular location is the nucleus. It catalyses the reaction L-lysyl-[protein] + acetyl-CoA = N(6)-acetyl-L-lysyl-[protein] + CoA + H(+). In terms of biological role, has histone acetyltransferase activity, with a preference for histone H4. The protein is Testis-specific chromodomain protein Y 1 (CDY1) of Homo sapiens (Human).